The chain runs to 178 residues: uncharacterized protein (178 aa).

The helical transmembrane segment at 7–27 (LAIGTAILLIGMAYWTVSIVE) threads the bilayer.

It is found in the membrane. This is an uncharacterized protein from Methanocaldococcus jannaschii (strain ATCC 43067 / DSM 2661 / JAL-1 / JCM 10045 / NBRC 100440) (Methanococcus jannaschii).